We begin with the raw amino-acid sequence, 102 residues long: MAKQKIRIRLKAYDHKILDQSAEKIVDTAKRSGANVSGPIPLPTEKAVYTILRAVHKYKDSREQFEMRTHKRLIDILNPTPQTVDALMRLDLPSGVDIEIKL.

It belongs to the universal ribosomal protein uS10 family. As to quaternary structure, part of the 30S ribosomal subunit.

In terms of biological role, involved in the binding of tRNA to the ribosomes. The sequence is that of Small ribosomal subunit protein uS10 from Brevibacillus brevis (strain 47 / JCM 6285 / NBRC 100599).